The chain runs to 315 residues: Aspartate carbamoyltransferase catalytic subunit (315 aa).

2 residues coordinate carbamoyl phosphate: Arg-64 and Thr-65. Lys-92 contributes to the L-aspartate binding site. 3 residues coordinate carbamoyl phosphate: Arg-114, His-142, and Gln-145. Arg-175 and Arg-229 together coordinate L-aspartate. Residues Gly-270 and Pro-271 each contribute to the carbamoyl phosphate site.

This sequence belongs to the aspartate/ornithine carbamoyltransferase superfamily. ATCase family. Heterododecamer (2C3:3R2) of six catalytic PyrB chains organized as two trimers (C3), and six regulatory PyrI chains organized as three dimers (R2).

The enzyme catalyses carbamoyl phosphate + L-aspartate = N-carbamoyl-L-aspartate + phosphate + H(+). Its pathway is pyrimidine metabolism; UMP biosynthesis via de novo pathway; (S)-dihydroorotate from bicarbonate: step 2/3. Its function is as follows. Catalyzes the condensation of carbamoyl phosphate and aspartate to form carbamoyl aspartate and inorganic phosphate, the committed step in the de novo pyrimidine nucleotide biosynthesis pathway. The polypeptide is Aspartate carbamoyltransferase catalytic subunit (Methylorubrum extorquens (strain CM4 / NCIMB 13688) (Methylobacterium extorquens)).